Reading from the N-terminus, the 128-residue chain is Secreted RxLR effector protein 57 (128 aa).

The signal sequence occupies residues 1–31 (MHRKRLRVVLSATLLDLITCVQLMLDPLVRS). The RxLR motif lies at 58–61 (RILR).

It belongs to the RxLR effector family.

Its subcellular location is the secreted. The protein resides in the host nucleus. The protein localises to the host cytoplasm. Its function is as follows. Secreted effector that completely suppresses the host cell death induced by cell death-inducing proteins. The protein is Secreted RxLR effector protein 57 of Plasmopara viticola (Downy mildew of grapevine).